Here is a 123-residue protein sequence, read N- to C-terminus: Small ribosomal subunit protein uS12 (123 aa).

At aspartate 89 the chain carries 3-methylthioaspartic acid.

Belongs to the universal ribosomal protein uS12 family. As to quaternary structure, part of the 30S ribosomal subunit. Contacts proteins S8 and S17. May interact with IF1 in the 30S initiation complex.

Functionally, with S4 and S5 plays an important role in translational accuracy. Its function is as follows. Interacts with and stabilizes bases of the 16S rRNA that are involved in tRNA selection in the A site and with the mRNA backbone. Located at the interface of the 30S and 50S subunits, it traverses the body of the 30S subunit contacting proteins on the other side and probably holding the rRNA structure together. The combined cluster of proteins S8, S12 and S17 appears to hold together the shoulder and platform of the 30S subunit. This Brucella abortus (strain S19) protein is Small ribosomal subunit protein uS12.